Reading from the N-terminus, the 345-residue chain is MPLDILQNRNNLLDVTSDEKQTEGALRPKLLAEFVGQNKVKNQLALLIQAAKIQGRVTDHALLAGPPGLGKTTLAMIVAAECGVSIRMSSGPAIQHAGDLAALLSSLLPGELLFIDEIHRMSRVAEEMLYLAMEDFRIDIMVGKGPGATSVPLELSPFTLVGATTRAGLLPGPLRDRFGFTARLDFYSPEELLQVLIRSARLMEIQYYDDALESIAVRSRGTPRVANRLLRRTRDYLLVSNSSEILSKEIALKAMDVYEVDSLGLDRLDRAVLHAIFDRFSGGPVGIKTLSAYLGEEAETIENSIEPFLVRQGLLVRTPRGRQITDLARKHMGFKEDLSGFELYL.

The segment at 3-187 (LDILQNRNNL…FGFTARLDFY (185 aa)) is large ATPase domain (RuvB-L). ATP is bound by residues L26, R27, G68, K71, T72, T73, 134 to 136 (EDF), R177, Y187, and R224. A Mg(2+)-binding site is contributed by T72. The segment at 188–259 (SPEELLQVLI…IALKAMDVYE (72 aa)) is small ATPAse domain (RuvB-S). A head domain (RuvB-H) region spans residues 262 to 345 (SLGLDRLDRA…EDLSGFELYL (84 aa)). DNA contacts are provided by R317 and R322.

It belongs to the RuvB family. Homohexamer. Forms an RuvA(8)-RuvB(12)-Holliday junction (HJ) complex. HJ DNA is sandwiched between 2 RuvA tetramers; dsDNA enters through RuvA and exits via RuvB. An RuvB hexamer assembles on each DNA strand where it exits the tetramer. Each RuvB hexamer is contacted by two RuvA subunits (via domain III) on 2 adjacent RuvB subunits; this complex drives branch migration. In the full resolvosome a probable DNA-RuvA(4)-RuvB(12)-RuvC(2) complex forms which resolves the HJ.

It localises to the cytoplasm. It catalyses the reaction ATP + H2O = ADP + phosphate + H(+). Functionally, the RuvA-RuvB-RuvC complex processes Holliday junction (HJ) DNA during genetic recombination and DNA repair, while the RuvA-RuvB complex plays an important role in the rescue of blocked DNA replication forks via replication fork reversal (RFR). RuvA specifically binds to HJ cruciform DNA, conferring on it an open structure. The RuvB hexamer acts as an ATP-dependent pump, pulling dsDNA into and through the RuvAB complex. RuvB forms 2 homohexamers on either side of HJ DNA bound by 1 or 2 RuvA tetramers; 4 subunits per hexamer contact DNA at a time. Coordinated motions by a converter formed by DNA-disengaged RuvB subunits stimulates ATP hydrolysis and nucleotide exchange. Immobilization of the converter enables RuvB to convert the ATP-contained energy into a lever motion, pulling 2 nucleotides of DNA out of the RuvA tetramer per ATP hydrolyzed, thus driving DNA branch migration. The RuvB motors rotate together with the DNA substrate, which together with the progressing nucleotide cycle form the mechanistic basis for DNA recombination by continuous HJ branch migration. Branch migration allows RuvC to scan DNA until it finds its consensus sequence, where it cleaves and resolves cruciform DNA. In Tropheryma whipplei (strain TW08/27) (Whipple's bacillus), this protein is Holliday junction branch migration complex subunit RuvB.